The following is a 5255-amino-acid chain: MVAKHSLENGVFHKMTENEKELILHFNNTKTDYPKNKTLHELFEEQAMKTPDHTALVFGAQRMTYRELNEKANQTARLLREKGIGRGSIAAIIADRSFEMIIGIIGILKAGGAYLPIDPETPKDRIAFMLSDTKAAVLLTQGKAADGIDCEADIVQLDREASDGFSKEPLSSVNDSGDTAYIIYTSGSTGTPKGVITPHYSVIRVVQNTNYIDITEDNVILQLSNYSFDGSVFDIFGALLNGASLVMIEKEALLNINRLGSAINEEKVSVMFITTALFNMIADIHVDCLSNLRKILFGGERASIPHVRKVLNHVGRDKLIHVYGPTESTVYATYYFINEIDDEAETIPIGSPLANTSVLIMDEAGKLVPIGVPGELCIAGDGLSKGYLNREELTAEKFIPHPFIPGERLYKTGDLAKWLPDGNIEFIGRIDHQVKIRGFRIELGEIESRLEMHEDINETIVTVREDEESRPYICAYITANREISLDELKGFLGEKLPEYMIPAYFVKLDKLPLTKNGKVDRKALPEPDRTAGAENEYEAPRNETEEKLAAVWQDVLHVEKAGIHDHFAQMGGHSLHAMELIAKIKEKMNVEIPLHQLFKLATIKELSAFIEANHQEDKGDTLVTRAADPENIHEIFPLTGIQLAYLVGRDETFEIGGVATNLTVEFEADVDLNRFQLTLQKLIDRHPILRTIVFENGTQKILEATQRYTIETQDLRGFTEEEINVRILEQREKMTSKIIDPSVWPLFELKTFMLPGEKKYFFLNVDPLICDDSSMKRLIREFKQLYENPGLQLPSLEYSFRDYVLASINFKQTSRYQKDQQYWLDKLDHFPSAPELPLKSDPAHVAKPSFKKFSTFLDGHTWNELKKKARHHHLTPTSVLCAAYAYILAYWSRQNHFAINLTVFNRIPFHPDVKNMIGDFTSLMLLDIHAEENMSSFWRFALNVQDTLLEALEHRHYDGVDVIRNIAKKNGMNKKAVMPIVFTSVLSENPDDSFDSLVDFDNIHFFSTRTSQVYIDNQVYEINGGLYITWDYVEQIFEHEVIESMFDQYIAVIQKAVSGEDVSTIQMNEKSRQMISAYNDTDQSFDAKPLHELFTGQVKHGPDRMALKHHDEVMTYQELDEKSNQVARFLIGKGVEKGDYIGVIGKRSLGTIVNLLAVLKTGAAYIPLDPDYPEERKAYIQSKSNCKFFISHDVYDKEHIERFSKAPVDRKVDLDDMAYVIFTSGSTGKPKGVQITHVPQRNTILDINEKFNVTEQDNIMGISSLCFDLSVYDVFGALSSGASLVIIDDQRDVFSLKETAEKERITIWNSVPAIMGMTADVYPDNELNHHLRLILLSGDWIPLQLPATIKKTFKNAEVISLGGATEGSIWSIYYPIQKVEEDWKSIPYGKPLANQKIYVLNQNKQLCPVGVEGELYIGGAGVASGYIHDQEKTEHSFIQHQELGYIYKTGDYGVLKEDGYVEFLGRKDSQVKIRGYRVEMGEIENTLVSHQEITKASVIDYTSPDGIKNLYAFVVAENAISQLDVKEFLQKTLPDYMIPAKFVQIEEIPLTVNGKVDKRTLHDLAEQHTADEGQRGGRMLPENETQAMLLEIWKDIFGLDSINLDVSYYEIGGDSLKAISIITEINKRMNVEMPISEIFKNDTIIALDHYLKNREESDMEHPIQKAREKEYYPTSPAQQRMYMLSMLENERGAYHIPMALLVEGRINAMQLENALKTFLQRHEILRTGFEIQNNELIQKIYENVDFRLEYECLDASITDQHALMEITSRYCKESIKPFDLSRPPLMRAKLIKIDDIRHILVINFHHIISDGVSQGILMNEILELYSNVPLPEVNVQYKDYVEWNHTFNQSAAMKKQEAYWLDVYRDIPSKLDFPYDYKRHHIDTFEGSSVFLEMERELSDHIRKLAKHNGTTLYTVMLSAYYVLLNKYTNQTDIVVGTAAAGRLHPDLQDVFGVFVNTLALRNEVDTSYSFKEFLQQTKERTIAAFDNSEYPFDDLIRKLNGVRESNRNPLFDTMFVLEDARMFTKQKGDVKLSPIIFELDNAKFDMIFNVLDFEQKIVLNIEYSTSLFKDETIQKIAEDYFRILEEVSENLDVALHQIDMISRQEKRTLLESFNHTKTAYPKGKAIHQLFEEQAKRIPDHTAVVFEDQKLTYRQLNEKANQVARLLREKGVKPDTLVGIMMERSSDMIAAILGVLKAGGAYLPIDPEYPPERMRYMAFDSEVKVIISDVPLAEELTAESIELIHMDDERIAGQDRSDIDNVNQSGDLAYVIYTSGSTGKPKGVMIEHQSLINLCSWHQSCFEVGQNDNSSIYASISFDAFVWELFPYITAGATVHVLNQETRLDVEKLNRYFHDHHITISFLPTPVCEQFTALDNHSLRTLLTGGDKLNVFKEKSYQIVNNYGPTENTVVATSFPIDKSHQNIPIGKPIDNVKVYILNKDLQLCPLGASGELCIAGEGLARGYVNRPELTREKFIGNPFVPGERMYRTGDLAKMLPDGNIQFLGRVDQQVKIRGYRIEPGEIENRLLKYEKIEEAAVIAREDGDHDPYLCAYVTVKKEVEPEKIRAFLKKSLPDYMIPQYFVQLDGLPLTVNGKVDKKSLPVPERSVTMDRRYEAPRDQMEEKLVSIWEEALGINKIGINSHFFEAGGHSLKAAALVSTIHKELNVKLPLRQIFETPTIKGLRDISVRRRKCFYIDRKTEEKPYYRLSSAQKRLYILSQTGSHVAYNMPFAMTLEGDFDIRRFENTLKNMVKRHESFRTSFVMIDGEVMQQIEKEIDFQVAYSDIGKESAEEKIKSFIRPFHLEKAPLLRAEVVKLNEREHLLMFDMHHIISDGVSTDIFIQELGALYEGKSLKPFHIQYKDYAEWENSHARSEELKRQEEYWLKTYKGDIPVLDLPIDHKRPLTKSSEGDTVTAAIESETFRKLQHMAKENGVTMYMLLLAGYTALLSKYTGQEDIIVGTPAAGRNHEDIQHLIGMFVNTLAIRNHPEGKKTFRDYLQEVKENTLQAYENQDYPFEELVEKVNIKRDMARNPLFDTMLVYHNTDVKPFEAEGLRSRLVEIKRGISKFDITVTASEAADGLRLEVEYSTTLFNKERMERLSEHLISLLEQAADHPDIAINQIDVLTKGERHRVLYDFNRTDGVFCKEMTIPELFEKQAEKTPDHPAVAFGDETISYRELNERANSLAFTLRQKGVGPDVIAGILTERSIEMIVGIMGILKAGGAYLPIDPAYPQERISYIVKDSDVSVLCAAGDVDPGEAYTGDIIRIDQTGQNDHVENLKHDIKPQHLAYVIYTSGSTGKPKGVMIEHHSVNNLVHGLNERIYQHLDAHLNVALVAPYIFDASVKQIFAALLFGHTLCIVPRETAWDAMSLIEYYSKNNINVSDMTPAHLNMLAYVDKTELEFDVKELIVGGDALTPDVIGGLFHKFPNLSCNITNVYGPTECCVDAASHQIESGKVPQTPSIPIGRPLLNTSIYIVDKELRPLPVGIAGELCIAGEGVARGYVNRPELTAEKFVDHPFEPGKKMYKTGDLAMWLPDGQIEFLGRADHQVKIRGYRIELGEVEQQLLTHEKIKEAAVIAGKDQNGNSYLCAYIASDKELPAADVRQFLEREMPDYMIPSYFVKLDRLPRTPSGKVDRSALPEADGNVNVMEGTGYDPPRNEIERKLVQVWREILGAEDIGISHHFFAAGGDSIKALQIVSRLAKMNLKLEMKALFANPKIKDLSRFITEETRHRKHNKPVTGETELLPIQKRYFANNKEELDHFNQSFMLFRKDGYDENIVRTAFNKILEQHDALRMIYEEKDGDIIQYNRGYRENLFDLDVYDVRGFDSQEEKVFELATGIQKKSSIRKGKLVHLGIFRADEGDHLLIAIHHLVVDGVSWRILFEDFETLYLQALKGEPLDIGYKTDSYQEFARQLKKYAQSRRLLKEREYWQKALEADVPFIPAEKLERDTFEHSATLSIRIGPDVTAKLLRNAFKAYNTEINDILLTALIAAVRDITGENKLKVMMEGHGREDILDGVDITRTIGWFTTVYPVFIDLGEEKEISQNIKMVKEALRKIPNKGIGYGVLKYMTEELQKIQTQAPLSFNYFGEMNNDMNRKVFSQSPFSPGESIGGKIVRHCAIEMNAISLNGELTIYTTFNQDQYQTSTIEQLNQSFKENLEKIVDHCVDKEGSDMTPSDYGDVSLGLEELELIKDKYSAFQIEKIYPLANMQKGMLFHNAMDQTSGAYFQQIVIKLKGRVHPDILEESFHEIVKRHEILRASFEYEITAEPRQIIARDRKTPFTSIDLTGENRTRQHRFIETYLKEDQEKGFDLSSEALMRVCLIKMSDESYRLIWSHHHILLDGWCLGIVLSELFSLYGKIMKGESRRLKEPKPYGDYIKWLEKQDQEEAVAYWKDYLKGYESRSELPAFNRGATSEEYCGKEKVISFSKELTTKITRIAKQHHVTINTVLQGIWGMILAKYKNTDEVVFGTVVSGREAPVDGIEEMVGLFIHTIPTRISFEGARSFKEVLKKTQAESIESNRYSYMNLSEIQVLSEMKRELITHVMAFQNYAFDEELFRSQSGETGFELEGVHGKERTNYNFNLTGVLEDEQLKLKLTFNENVYDNTIIETLEKHIITVAEQVAEDETQTLRDINLVSKEEQHRILHTFNDTKTGYPKDKPLHELFEEQAMKTPDHTALVFGAQRMTYRELNEKANQTARLLREKGIGRGSIAAIIADRSFEMIIGIIGILKAGGTYLPIDPETPRDRIDYMLKNSGAALLVTTDSLLKPFDIKTVDLCSDELHLLSEENLPRVNRSSDTAYIVYTSGSTGTPKGVVIPHYSAARVVKNTNYIDITGNDVILQLSNYSFDGSVFDIFGALLNGASLVLIEKETVLNTHELAEVIKKEQVSVMFITTALFNTLADINIGCLAKLRKILFGGERASIPHVRKVLDHVGRDKLIHVYGPTESTVYATYYFINEIDDEAETIPIGSPLANTSVLIMDEAGKLLPIGVPGELCIAGDGLSKGYLNREELTAEKFIPHPFIPGERLYKTGDLAKWLPDGNIEFIGRIDHQVKIRGFRIELGEIESRLEMHEDINETIVTVREDEESRPYICAYITANREISLDELKGFLGEKLPDYMIPAYFVKMDKLPLTKNGKVDRKALPEPDRSAGTEAEYEAPRNYVEQRIISILEDVLGTERMGISCHFFDKGGNSLKAMQAVHSINKTFGIDMRISTFFKHPTAKSLARFVLTAEAESAVSEEYAEEEV.

The tract at residues 39-612 (LHELFEEQAM…IKELSAFIEA (574 aa)) is domain 1 (isoleucine-activating). Basic and acidic residues predominate over residues 519–531 (VDRKALPEPDRTA). Positions 519 to 542 (VDRKALPEPDRTAGAENEYEAPRN) are disordered. The Carrier 1 domain maps to 539 to 614 (APRNETEEKL…ELSAFIEANH (76 aa)). O-(pantetheine 4'-phosphoryl)serine is present on Ser574. The interval 621–1037 (TLVTRAADPE…ITWDYVEQIF (417 aa)) is cyclization. A domain 2 (cysteine-activating) region spans residues 1109-1648 (HHDEVMTYQE…FKNDTIIALD (540 aa)). Carrier domains lie at 1580 to 1655 (LPEN…KNRE), 2616 to 2691 (APRD…VRRR), 3659 to 3733 (PPRN…TEET), and 5166 to 5241 (APRN…LTAE). O-(pantetheine 4'-phosphoryl)serine is present on residues Ser1615, Ser2651, Ser3694, and Ser5201. A domain 3 (leucine-activating) region spans residues 2124-2689 (GKAIHQLFEE…IKGLRDISVR (566 aa)). The interval 3164–3732 (DHPAVAFGDE…KDLSRFITEE (569 aa)) is domain 4 (glutamine-activating). The segment at 4668-5249 (LHELFEEQAM…AEAESAVSEE (582 aa)) is domain 5 (isoleucine-activating).

It belongs to the ATP-dependent AMP-binding enzyme family. Large multienzyme complex of BA1, BA2 and BA3. Pantetheine 4'-phosphate serves as cofactor.

It catalyses the reaction L-glutamate = D-glutamate. The protein operates within antibiotic biosynthesis; bacitracin biosynthesis. Functionally, activates five amino acids, incorporates two D-amino acids, releases and cyclizes the mature bacitracin. This Bacillus licheniformis protein is Bacitracin synthase 1 (bacA).